The sequence spans 733 residues: EF-hand domain-containing family member C2 (733 aa).

DM10 domains are found at residues 61–168, 212–354, and 416–523; these read DKQV…TKIG, DRKV…RTKY, and ISNT…ERNS.

Microtubule inner protein component of sperm flagellar doublet microtubules. In terms of tissue distribution, expressed in trachea multiciliated cells.

Its subcellular location is the cytoplasm. It localises to the cytoskeleton. It is found in the cilium axoneme. The protein resides in the flagellum axoneme. Its function is as follows. Microtubule inner protein (MIP) part of the dynein-decorated doublet microtubules (DMTs) in cilia axoneme, which is required for motile cilia beating. In Bos taurus (Bovine), this protein is EF-hand domain-containing family member C2 (EFHC2).